Reading from the N-terminus, the 137-residue chain is Large ribosomal subunit protein uL16 (137 aa).

Positions 1–20 (MLQPSNRKYRKDFKGRNRGV) are disordered. Residues 7-17 (RKYRKDFKGRN) are compositionally biased toward basic residues.

It belongs to the universal ribosomal protein uL16 family. Part of the 50S ribosomal subunit.

Binds 23S rRNA and is also seen to make contacts with the A and possibly P site tRNAs. The polypeptide is Large ribosomal subunit protein uL16 (Coxiella burnetii (strain CbuK_Q154) (Coxiella burnetii (strain Q154))).